We begin with the raw amino-acid sequence, 206 residues long: Probable nicotinate-nucleotide adenylyltransferase (206 aa).

This sequence belongs to the NadD family.

The enzyme catalyses nicotinate beta-D-ribonucleotide + ATP + H(+) = deamido-NAD(+) + diphosphate. It participates in cofactor biosynthesis; NAD(+) biosynthesis; deamido-NAD(+) from nicotinate D-ribonucleotide: step 1/1. Its function is as follows. Catalyzes the reversible adenylation of nicotinate mononucleotide (NaMN) to nicotinic acid adenine dinucleotide (NaAD). The polypeptide is Probable nicotinate-nucleotide adenylyltransferase (Paenarthrobacter aurescens (strain TC1)).